The sequence spans 514 residues: Serine--tRNA ligase, cytoplasmic (514 aa).

Position 1 is an N-acetylmethionine (Met-1). The segment at 9-61 (RVDKGGDPALIRETQEKRFKDPGLVDQLVKADSEWRRCRFRADNLNKLKNLCS) is interaction with tRNA. At Ser-241 the chain carries Phosphoserine. Residues Thr-271 and Arg-302 each coordinate L-serine. Residues 302–304 (RQE) and 318–321 (VHQF) each bind ATP. Lys-323 is modified (N6-acetyllysine). An L-serine-binding site is contributed by Glu-325. ATP is bound at residue 391-394 (ELVS). Asn-427 provides a ligand contact to L-serine. The segment at 472–514 (KPAPIDQEPSKKQKKQHEGSKKKAAARDVTLENRLQNMEVTDA) is disordered. Basic and acidic residues predominate over residues 479 to 502 (EPSKKQKKQHEGSKKKAAARDVTL). Positions 482-494 (KKQKKQHEGSKKK) match the Nuclear localization signal motif. Residues 504–514 (NRLQNMEVTDA) are compositionally biased toward polar residues.

It belongs to the class-II aminoacyl-tRNA synthetase family. Type-1 seryl-tRNA synthetase subfamily. In terms of assembly, homodimer. The tRNA molecule may bind across the dimer. Interacts with SIRT2. Interacts with METTL6; interaction is required for the tRNA N(3)-methylcytidine methyltransferase activity of METTL6.

Its subcellular location is the cytoplasm. It is found in the nucleus. The enzyme catalyses tRNA(Ser) + L-serine + ATP = L-seryl-tRNA(Ser) + AMP + diphosphate + H(+). It catalyses the reaction tRNA(Sec) + L-serine + ATP = L-seryl-tRNA(Sec) + AMP + diphosphate + H(+). It functions in the pathway aminoacyl-tRNA biosynthesis; selenocysteinyl-tRNA(Sec) biosynthesis; L-seryl-tRNA(Sec) from L-serine and tRNA(Sec): step 1/1. Catalyzes the attachment of serine to tRNA(Ser) in a two-step reaction: serine is first activated by ATP to form Ser-AMP and then transferred to the acceptor end of tRNA(Ser). Is probably also able to aminoacylate tRNA(Sec) with serine, to form the misacylated tRNA L-seryl-tRNA(Sec), which will be further converted into selenocysteinyl-tRNA(Sec). In the nucleus, binds to the VEGFA core promoter and prevents MYC binding and transcriptional activation by MYC. Recruits SIRT2 to the VEGFA promoter, promoting deacetylation of histone H4 at 'Lys-16' (H4K16). Thereby, inhibits the production of VEGFA and sprouting angiogenesis mediated by VEGFA. The chain is Serine--tRNA ligase, cytoplasmic (SARS1) from Oryctolagus cuniculus (Rabbit).